The chain runs to 268 residues: Shikimate dehydrogenase (NADP(+)) (268 aa).

Shikimate-binding positions include serine 13 to serine 15 and threonine 60. The Proton acceptor role is filled by lysine 64. Glutamate 76 is an NADP(+) binding site. The shikimate site is built by asparagine 85 and aspartate 100. NADP(+)-binding positions include glycine 124–alanine 128, asparagine 148–arginine 153, and isoleucine 209. A shikimate-binding site is contributed by tyrosine 211. Residue glycine 232 coordinates NADP(+).

The protein belongs to the shikimate dehydrogenase family. In terms of assembly, homodimer.

It carries out the reaction shikimate + NADP(+) = 3-dehydroshikimate + NADPH + H(+). Its pathway is metabolic intermediate biosynthesis; chorismate biosynthesis; chorismate from D-erythrose 4-phosphate and phosphoenolpyruvate: step 4/7. Involved in the biosynthesis of the chorismate, which leads to the biosynthesis of aromatic amino acids. Catalyzes the reversible NADPH linked reduction of 3-dehydroshikimate (DHSA) to yield shikimate (SA). The chain is Shikimate dehydrogenase (NADP(+)) from Staphylococcus aureus (strain MRSA252).